The chain runs to 198 residues: Small ribosomal subunit protein uS5 (198 aa).

The region spanning 46–109 (LEDDVLEISM…NNAKLNIFKV (64 aa)) is the S5 DRBM domain.

The protein belongs to the universal ribosomal protein uS5 family. Part of the 30S ribosomal subunit. Contacts protein S4.

With S4 and S12 plays an important role in translational accuracy. This chain is Small ribosomal subunit protein uS5, found in Archaeoglobus fulgidus (strain ATCC 49558 / DSM 4304 / JCM 9628 / NBRC 100126 / VC-16).